A 164-amino-acid polypeptide reads, in one-letter code: UPF0304 protein PM1500 (164 aa).

It belongs to the UPF0304 family.

The protein is UPF0304 protein PM1500 of Pasteurella multocida (strain Pm70).